A 245-amino-acid chain; its full sequence is Thiopurine S-methyltransferase (245 aa).

29 to 40 (WREKWVDGKIGF) is a binding site for S-adenosyl-L-methionine. Phe-40 serves as a coordination point for substrate. Lys-58 carries the N6-acetyllysine modification. Residues Leu-69, Glu-90, and Arg-152 each coordinate S-adenosyl-L-methionine.

The protein belongs to the class I-like SAM-binding methyltransferase superfamily. TPMT family. Monomer.

The protein localises to the cytoplasm. It catalyses the reaction S-adenosyl-L-methionine + a thiopurine = S-adenosyl-L-homocysteine + a thiopurine S-methylether.. The sequence is that of Thiopurine S-methyltransferase (TPMT) from Panthera leo (Lion).